A 919-amino-acid chain; its full sequence is MSTTSGTGGVSYRNGTQRSSLRTQSSASTSSGGQKASVKSKSVLRKSSPAALGGGSSKSGGGGDAGVPGRVRVAVRLRPRNGEELIADADFADCVELQPELKRLKLRKNNWDTDTFEFDEVLTEYASQKRVYEVVAKPVVEGVLDGYNGTIMAYGQTGTGKTYTLGQLGEEDVADRGIMVRAMEDILAEVSLETDSISVSYLQLYMETVQDLLDPSNDNIAIVEDPKNGDVSLPGATLVEIRDQQSFLELLQLGEAHRFAANTKLNTESSRSHAILMVNVRRSMKTRDGLSSESNGNSHMTKSLKPPVVRKGKLVVVDLAGSERINKSGSEGHTLEEAKSINLSLSALGKCINALAENSSHVPFRDSKLTRLLRDSFGGTARTSLVITIGPSPRHRGETTSTIMFGQRAMKVENMVKIKEEFDYKSLSRRLEVQLDNLIEENERQQKAFVDEIERITVEAHNQISEAEKRYANALEDEKLRYQNDYMESIKKLEENWSKNQKKLAAERLALGEKNGLDITSNGNRSIAPALEEVSELKKLLQKEAQSKMAAEEEVNRLKHQLNEFKKVEASGNSEIMRLHKMLENETQQKEKLEGEIATLHSQLLQLSLTADETRRNLEQHGSEKTSGARDSLMSQLRLPQIQDPGNAEKPPVARLFEQVGLQKILSLLEAEDADVRIHAVKVVANLAAEEANQQQIVEAGGLTSLLMLLKNTEDETIHRVAAGAIANLAMNETNQELIMDQGGIGLLSSTAANAEDPQTLRMVAGAIANLCGNDKLQTKLRSEGGIAALLGMVRCGHPDVLAQVARGIANFAKCESRASTQGTKRGKSLLIEDGALSWIVQNAKTETAAIRRHIELALCHLAQHEGNAKEMVKEGAMWELVRISRDCSREDIRSLAHRTLTSSPTFLTELRRLRVDIR.

Residues 1-68 (MSTTSGTGGV…SGGGGDAGVP (68 aa)) are disordered. The span at 15–51 (GTQRSSLRTQSSASTSSGGQKASVKSKSVLRKSSPAA) shows a compositional bias: low complexity. Gly residues predominate over residues 52–66 (LGGGSSKSGGGGDAG). The Kinesin motor domain maps to 70–412 (RVRVAVRLRP…IMFGQRAMKV (343 aa)). An ATP-binding site is contributed by 155-162 (GQTGTGKT). A disordered region spans residues 286–305 (TRDGLSSESNGNSHMTKSLK). Positions 291–301 (SSESNGNSHMT) are enriched in polar residues. Positions 382–390 (RTSLVITIG) match the D-BOX motif. Coiled coils occupy residues 428–492 (SRRL…SIKK) and 530–621 (ALEE…LEQH). 4 ARM repeats span residues 650 to 689 (KPPV…NLAA), 691 to 731 (EANQ…NLAM), 733 to 773 (ETNQ…NLCG), and 775 to 814 (DKLQ…NFAK).

The protein belongs to the TRAFAC class myosin-kinesin ATPase superfamily. Kinesin family. Ungrouped subfamily. As to quaternary structure, interacts (via C-terminus) with NEK5. In terms of tissue distribution, expressed in leaves, guard cells, trichomes, vascular tissues, stele of the root tip region and columella cells. Highest expression detected in guard cells.

The protein resides in the cytoplasm. It localises to the cytoskeleton. This chain is Kinesin-like protein KIN-UA, found in Arabidopsis thaliana (Mouse-ear cress).